Reading from the N-terminus, the 555-residue chain is Formate--tetrahydrofolate ligase (555 aa).

An ATP-binding site is contributed by 65–72 (TPAGEGKS).

It belongs to the formate--tetrahydrofolate ligase family.

The catalysed reaction is (6S)-5,6,7,8-tetrahydrofolate + formate + ATP = (6R)-10-formyltetrahydrofolate + ADP + phosphate. Its pathway is one-carbon metabolism; tetrahydrofolate interconversion. This chain is Formate--tetrahydrofolate ligase, found in Staphylococcus aureus (strain bovine RF122 / ET3-1).